The primary structure comprises 60 residues: L-amino-acid oxidase (60 aa).

1 to 4 (GPMR) provides a ligand contact to FAD. A substrate-binding site is contributed by Arg4.

The protein belongs to the flavin monoamine oxidase family. FIG1 subfamily. In terms of assembly, homodimer; non-covalently linked. It depends on FAD as a cofactor. Contains 2 disulfide bonds. In terms of processing, N-glycosylated. Expressed by the venom gland.

The protein localises to the secreted. The enzyme catalyses an L-alpha-amino acid + O2 + H2O = a 2-oxocarboxylate + H2O2 + NH4(+). Its function is as follows. Catalyzes an oxidative deamination of predominantly hydrophobic and aromatic L-amino acids, thus producing hydrogen peroxide that may contribute to the diverse toxic effects of this enzyme. Exhibits diverse biological activities, such as hemorrhage, hemolysis, edema, apoptosis of vascular endothelial cells or tumor cell lines, antibacterial and antiparasitic activities, as well as regulation of platelet aggregation. Effects of snake L-amino oxidases on platelets are controversial, since they either induce aggregation or inhibit agonist-induced aggregation. These different effects are probably due to different experimental conditions. The protein is L-amino-acid oxidase of Bitis gabonica (Gaboon adder).